Consider the following 165-residue polypeptide: Ribosome maturation factor RimM (165 aa).

Residues 89 to 161 (EADTHYVVDL…KIVIKPVRQW (73 aa)) form the PRC barrel domain.

This sequence belongs to the RimM family. In terms of assembly, binds ribosomal protein uS19.

The protein localises to the cytoplasm. Functionally, an accessory protein needed during the final step in the assembly of 30S ribosomal subunit, possibly for assembly of the head region. Essential for efficient processing of 16S rRNA. May be needed both before and after RbfA during the maturation of 16S rRNA. It has affinity for free ribosomal 30S subunits but not for 70S ribosomes. This chain is Ribosome maturation factor RimM, found in Clostridium botulinum (strain Eklund 17B / Type B).